The following is a 105-amino-acid chain: Antithrombin-III (105 aa).

An N-terminal signal peptide occupies residues 1 to 17 (MHLFIGVSLRPLGHGIP). A disordered region spans residues 38-105 (ICIYRNPEKK…MRRTSSCRPS (68 aa)). Over residues 43 to 53 (NPEKKPQERRG) the composition is skewed to basic and acidic residues.

It belongs to the serpin family. In terms of assembly, forms protease inhibiting heterodimer with TMPRSS7. In terms of tissue distribution, plasma.

It localises to the secreted. The protein localises to the extracellular space. Its function is as follows. Most important serine protease inhibitor in plasma that regulates the blood coagulation cascade. AT-III inhibits thrombin, matriptase-3/TMPRSS7, as well as factors IXa, Xa and XIa. Its inhibitory activity is greatly enhanced in the presence of heparin. This chain is Antithrombin-III (SERPINC1), found in Gallus gallus (Chicken).